Reading from the N-terminus, the 249-residue chain is Probable transcriptional regulatory protein HY04AAS1_0501 (249 aa).

The protein belongs to the TACO1 family.

The protein localises to the cytoplasm. The polypeptide is Probable transcriptional regulatory protein HY04AAS1_0501 (Hydrogenobaculum sp. (strain Y04AAS1)).